The primary structure comprises 443 residues: Endoplasmic reticulum protein SC65 (443 aa).

The first 18 residues, 1–18 (MARAAWGLLWLLLGSAGA), serve as a signal peptide directing secretion. Residues 81 to 102 (SGPATSQPRPAPGPDGDNEGDG) are disordered. The N-linked (GlcNAc...) asparagine glycan is linked to N367. 3 stretches are compositionally biased toward acidic residues: residues 387-398 (DEMELEETESLP), 407-419 (AEFEGEGDYEEGL), and 431-443 (GDEDEAEPEPELA). The segment at 387 to 443 (DEMELEETESLPEPEKPLSDAEFEGEGDYEEGLYADWWQEPDAKGDEDEAEPEPELA) is disordered.

This sequence belongs to the leprecan family. In terms of assembly, interacts with PLOD1, P3H3 and PPIB. Identified in a complex with PLOD1 and P3H3. Found in testis, brain, heart and at a much lower level in liver.

Its subcellular location is the endoplasmic reticulum. Part of a complex composed of PLOD1, P3H3 and P3H4 that catalyzes hydroxylation of lysine residues in collagen alpha chains and is required for normal assembly and cross-linking of collagen fibrils. Required for normal bone density and normal skin stability via its role in hydroxylation of lysine residues in collagen alpha chains and in collagen fibril assembly. This Rattus norvegicus (Rat) protein is Endoplasmic reticulum protein SC65.